A 192-amino-acid chain; its full sequence is Phosphomevalonate kinase (192 aa).

Residues Lys-17 to Asp-23 and Arg-141 each bind ATP. Residue Asn-170 participates in substrate binding. Residues His-171, Arg-176, and Gln-180 each contribute to the ATP site.

Monomer. As to expression, heart, liver, skeletal muscle, kidney, and pancreas. Lower level in brain, placenta and lung.

It is found in the cytoplasm. The protein resides in the cytosol. The enzyme catalyses (R)-5-phosphomevalonate + ATP = (R)-5-diphosphomevalonate + ADP. The protein operates within isoprenoid biosynthesis; isopentenyl diphosphate biosynthesis via mevalonate pathway; isopentenyl diphosphate from (R)-mevalonate: step 2/3. Catalyzes the reversible ATP-dependent phosphorylation of mevalonate 5-phosphate to produce mevalonate diphosphate and ADP, a key step in the mevalonic acid mediated biosynthesis of isopentenyl diphosphate and other polyisoprenoid metabolites. This is Phosphomevalonate kinase (PMVK) from Homo sapiens (Human).